A 1090-amino-acid polypeptide reads, in one-letter code: Neurofilament heavy polypeptide (1090 aa).

The head stretch occupies residues 2-98; that stretch reads MSFGSADALL…AVAARSEKEQ (97 aa). 2 positions are modified to phosphoserine: Ser74 and Ser122. Positions 95 to 411 constitute an IF rod domain; it reads EKEQLQALND…KLLEGEECRI (317 aa). A coil 1A region spans residues 99–130; it reads LQALNDRFAGYIDKVRQLEAHNRSLEGEAAAL. Positions 131–143 are linker 1; sequence RQQQAGRAAMGEL. The tract at residues 144–242 is coil 1B; it reads YEREVREMRG…QEEVGELLGQ (99 aa). The tract at residues 243–264 is linker 12; it reads IQGCGAAQAQAQAEARDALKCD. The coil 2A stretch occupies residues 265–286; it reads VTSALREIRAQLEGHAVQSTLQ. A linker 2 region spans residues 287-290; that stretch reads SEEW. The interval 291 to 411 is coil 2B; that stretch reads FRVRLDRLSE…KLLEGEECRI (121 aa). 3 positions are modified to phosphoserine: Ser345, Ser416, and Ser419. The segment at 412-1090 is tail; the sequence is GFGPSPFSLT…TEDKATKGEK (679 aa). Positions 456-1090 are disordered; that stretch reads EGQTEEIRVT…TEDKATKGEK (635 aa). Residues 468 to 495 are compositionally biased toward acidic residues; sequence VTEEEDKEAQGQEGEEAEEGEEKEEEEG. Positions 496-506 are enriched in low complexity; sequence AAATSPPAEEA. Residues Ser508, Ser523, Ser529, Ser535, Ser541, Ser547, Ser553, Ser559, Ser565, Ser571, Ser577, Ser583, Ser589, Ser595, Ser601, Ser607, Ser613, Ser619, Ser625, Ser631, Ser637, Ser643, Ser649, Ser655, Ser661, Ser667, Ser673, Ser679, Ser685, Ser691, Ser697, Ser703, Ser709, Ser715, Ser721, Ser727, Ser733, Ser739, Ser745, Ser751, Ser757, Ser763, and Ser769 each carry the phosphoserine modification. Over residues 508–579 the composition is skewed to basic and acidic residues; the sequence is SPEKETKSRV…KSPAEAKSPA (72 aa). 42 consecutive repeat copies span residues 522-527, 528-533, 534-539, 540-545, 546-551, 552-557, 558-563, 564-569, 570-575, 576-581, 582-587, 588-593, 594-599, 600-605, 606-611, 612-617, 618-623, 624-629, 630-635, 636-641, 642-647, 648-653, 654-659, 660-665, 666-671, 672-677, 678-683, 684-689, 690-695, 696-701, 702-707, 708-713, 714-719, 720-725, 726-731, 732-737, 738-743, 744-749, 750-755, 756-761, 762-767, and 768-773. The tract at residues 522–892 is 52 X 6 AA approximate tandem repeats of K-S-P-[AGISV]-[EATK]-[APVQ]; the sequence is KSPGEAKSPG…KEEVKSPVKE (371 aa). Residues 595–633 show a composition bias toward basic and acidic residues; that stretch reads SPSEAKSPAEAKSPAEAKSPAEAKSPAEAKSPAEAKSPA. Positions 649 to 717 are enriched in basic and acidic residues; sequence SPSEAKSPAE…KSPAEVKSPG (69 aa). Basic and acidic residues predominate over residues 745–781; the sequence is SPGEAKSPAEAKSPAEAKSPIEVKSPEKAKTPVKEGA. Residues 774 to 779 form a 43; approximate repeat; the sequence is KTPVKE. 6 tandem repeats follow at residues 782-787, 788-793, 794-799, 808-813, 814-819, and 833-838. A phosphoserine mark is found at Ser783, Ser789, Ser795, Ser809, Ser815, and Ser834. The segment covering 788-834 has biased composition (basic and acidic residues); sequence KSPEKAKSPVKEDIKPPAEAKSPEKAKSPVKEGAKPPEKAKPLDVKS. Thr839 carries the post-translational modification Phosphothreonine. Basic and acidic residues-rich tracts occupy residues 843-964 and 974-1090; these read EEAK…KAVA and GVKE…KGEK. 3 tandem repeats follow at residues 858-863, 866-871, and 887-892. Residues Ser859, Ser867, Ser888, and Ser947 each carry the phosphoserine modification.

It belongs to the intermediate filament family. Forms heterodimers with NEFL; which can further hetero-oligomerize (in vitro). Forms heterodimers with INA (in vitro). Post-translationally, there are a number of repeats of the tripeptide K-S-P, NFH is phosphorylated on a number of the serines in this motif. It is thought that phosphorylation of NFH results in the formation of interfilament cross bridges that are important in the maintenance of axonal caliber. Phosphorylation seems to play a major role in the functioning of the larger neurofilament polypeptides (NF-M and NF-H), the levels of phosphorylation being altered developmentally and coincidentally with a change in the neurofilament function. In terms of processing, phosphorylated in the head and rod regions by the PKC kinase PKN1, leading to the inhibition of polymerization. In terms of tissue distribution, expressed in the sciatic nerve (at protein level).

The protein localises to the cytoplasm. It is found in the cytoskeleton. The protein resides in the cell projection. It localises to the axon. Functionally, neurofilaments usually contain three intermediate filament proteins: NEFL, NEFM, and NEFH which are involved in the maintenance of neuronal caliber. NEFH has an important function in mature axons that is not subserved by the two smaller NF proteins. May additionally cooperate with the neuronal intermediate filament proteins PRPH and INA to form neuronal filamentous networks. The protein is Neurofilament heavy polypeptide (Nefh) of Mus musculus (Mouse).